We begin with the raw amino-acid sequence, 213 residues long: Calcineurin B-like protein 8 (213 aa).

The N-myristoyl glycine moiety is linked to residue Gly-2. EF-hand domains follow at residues 31 to 66 (EVEALFELFKKISHSIFRDGLIHKEEFQLALFRNSN), 67 to 102 (KKNLFANRIFDLFDLKRNGVIDFGEFVRSLSIFHPE), 104 to 139 (PLGDKIAFAFRLYDLRGTGCIEREELHEMVLALLNE), and 148 to 183 (AVEQIVDQTFKQADLNDDGKIDPDEWKTFASKNPAL). Ca(2+)-binding residues include Asp-161, Asn-163, Asp-165, Lys-167, and Glu-172.

Belongs to the calcineurin regulatory subunit family. In terms of assembly, homodimer. In terms of tissue distribution, expressed at low levels in roots, shoots, culms, leaves and young spikelets.

It is found in the cell membrane. Its function is as follows. Acts as a calcium sensor. May function as positive regulator of salt stress responses. CBL proteins interact with CIPK serine-threonine protein kinases. Binding of a CBL protein to the regulatory NAF domain of a CIPK protein lead to the activation of the kinase in a calcium-dependent manner. The polypeptide is Calcineurin B-like protein 8 (CBL8) (Oryza sativa subsp. japonica (Rice)).